The chain runs to 296 residues: Tyrosine recombinase XerC (296 aa).

Residues 1–84 form the Core-binding (CB) domain; it reads MEKIQQAYLY…TLRSFYEYWM (84 aa). The region spanning 105 to 286 is the Tyr recombinase domain; that stretch reads YLPHFFYEEE…TNEQLRKVYL (182 aa). Active-site residues include Arg-145, Lys-169, His-238, Arg-241, and His-264. Tyr-273 functions as the O-(3'-phospho-DNA)-tyrosine intermediate in the catalytic mechanism.

This sequence belongs to the 'phage' integrase family. XerC subfamily. Forms a cyclic heterotetrameric complex composed of two molecules of XerC and two molecules of XerD.

Its subcellular location is the cytoplasm. Its function is as follows. Site-specific tyrosine recombinase, which acts by catalyzing the cutting and rejoining of the recombining DNA molecules. The XerC-XerD complex is essential to convert dimers of the bacterial chromosome into monomers to permit their segregation at cell division. It also contributes to the segregational stability of plasmids. This chain is Tyrosine recombinase XerC, found in Staphylococcus saprophyticus subsp. saprophyticus (strain ATCC 15305 / DSM 20229 / NCIMB 8711 / NCTC 7292 / S-41).